A 245-amino-acid chain; its full sequence is MSTLFESFEVIPAVDMQDGDVVQLVQGERGTETRYGDPVVAAKQWVEAGAKTLHLVDLDGAFEGDRMNATAVDAIIDAVDIPVQLGGGIRTANDAASLLDRGVNRVILGTAAVENPDLVAELAESYPGRIIVSLDAADGEVVVSGWTESTGIDPAVAAARFADYGACGILFTDVDVEGKLAGIQSSVTARVIDAVDIPVIASGGVASLDDIQTLHTTGAAATVVGTALYENKFTLADAMEVCESD.

Aspartate 15 serves as the catalytic Proton acceptor. The Proton donor role is filled by aspartate 135.

This sequence belongs to the HisA/HisF family.

The protein localises to the cytoplasm. The enzyme catalyses 1-(5-phospho-beta-D-ribosyl)-5-[(5-phospho-beta-D-ribosylamino)methylideneamino]imidazole-4-carboxamide = 5-[(5-phospho-1-deoxy-D-ribulos-1-ylimino)methylamino]-1-(5-phospho-beta-D-ribosyl)imidazole-4-carboxamide. The protein operates within amino-acid biosynthesis; L-histidine biosynthesis; L-histidine from 5-phospho-alpha-D-ribose 1-diphosphate: step 4/9. This Haloquadratum walsbyi (strain DSM 16790 / HBSQ001) protein is 1-(5-phosphoribosyl)-5-[(5-phosphoribosylamino)methylideneamino] imidazole-4-carboxamide isomerase.